We begin with the raw amino-acid sequence, 270 residues long: MMNRIHAVILDWAGTTVDFGSFAPTQIFVEAFRQAFDVEITLAEARVPMGLGKWQHIEALGKLPAVDARWQAKFGRSMSAADIDAIYAAFMPLQIAKVVDFSSPIAGVIDTIAALRAEGIKIGSCSGYPRAVMERLVPAAAEHGYRPDHWVATDDLAAGGRPGPWMALQNVIALGIDAVAHCVKVDDAALGISEGLNAGMWTVGLAVSGNEFGATWDAYQTMSKEDVAVRREHAASKLYAAGAHYVVDSLADLSGVIAHINARLAQGERP.

Catalysis depends on D11, which acts as the Nucleophile. Mg(2+) is bound by residues D11 and A13. K53 serves as the catalytic Schiff-base intermediate with substrate. A Mg(2+)-binding site is contributed by D187.

The protein belongs to the HAD-like hydrolase superfamily. PhnX family. Homodimer. Mg(2+) serves as cofactor.

It carries out the reaction phosphonoacetaldehyde + H2O = acetaldehyde + phosphate + H(+). Functionally, involved in phosphonate degradation. The polypeptide is Phosphonoacetaldehyde hydrolase (Salmonella gallinarum (strain 287/91 / NCTC 13346)).